A 301-amino-acid chain; its full sequence is ATP synthase gamma chain (301 aa).

Belongs to the ATPase gamma chain family. As to quaternary structure, F-type ATPases have 2 components, CF(1) - the catalytic core - and CF(0) - the membrane proton channel. CF(1) has five subunits: alpha(3), beta(3), gamma(1), delta(1), epsilon(1). CF(0) has three main subunits: a, b and c.

It is found in the cell inner membrane. In terms of biological role, produces ATP from ADP in the presence of a proton gradient across the membrane. The gamma chain is believed to be important in regulating ATPase activity and the flow of protons through the CF(0) complex. The chain is ATP synthase gamma chain from Bordetella petrii (strain ATCC BAA-461 / DSM 12804 / CCUG 43448).